A 326-amino-acid chain; its full sequence is Mitochondrial substrate carrier family protein R (326 aa).

Solcar repeat units follow at residues 9–95 (TSPM…LKNN), 101–214 (KSSV…FKRI), and 226–318 (VIGI…LCDY). 6 helical membrane passes run 12–32 (MVTLLAGGVSGVIAKSTIAPL), 64–84 (LAGLWKGNTATILRIFPYSAI), 104–124 (VQIFIAGSLGFSCAILLTYPL), 185–205 (GIWRGILPTLYGSIPYAGVGY), 226–246 (VIGIYKLISGGVAGGLGQTAA), and 290–310 (LFKGISINYIKVIPTNGVAFL).

It belongs to the mitochondrial carrier (TC 2.A.29) family.

It is found in the mitochondrion inner membrane. In terms of biological role, mitochondrial solute carriers shuttle metabolites, nucleotides, and cofactors through the mitochondrial inner membrane. May be involved in the accumulation of coenzyme A in the mitochondrial matrix. This is Mitochondrial substrate carrier family protein R (mcfR) from Dictyostelium discoideum (Social amoeba).